Consider the following 563-residue polypeptide: Proton channel OTOP2 (563 aa).

A disordered region spans residues methionine 1–proline 20. A run of 12 helical transmembrane segments spans residues leucine 30–glycine 50, valine 62–leucine 82, proline 100–phenylalanine 120, isoleucine 137–serine 157, leucine 173–valine 193, phenylalanine 242–methionine 262, phenylalanine 290–leucine 310, alanine 325–leucine 345, leucine 373–valine 393, leucine 403–isoleucine 423, aspartate 496–alanine 516, and phenylalanine 528–tyrosine 548.

Belongs to the otopetrin family. Expressed at higher level in stomach, testis and olfactory bulb.

It localises to the cell membrane. It catalyses the reaction H(+)(in) = H(+)(out). With respect to regulation, actives at neutral and alkaline extracellular pH, acid extracellular pH appears to inhibit the channel. Insensitive to activation by Zn(2+). Its function is as follows. Proton-selective ion channel open at neutral pH. Actives at neutral and alkaline extracellular pH, likely participates in some alkali-related physiological activities. This Mus musculus (Mouse) protein is Proton channel OTOP2.